We begin with the raw amino-acid sequence, 449 residues long: UDP-N-acetylmuramoyl-tripeptide--D-alanyl-D-alanine ligase (449 aa).

106–112 (GSVGKTS) is an ATP binding site.

The protein belongs to the MurCDEF family. MurF subfamily.

Its subcellular location is the cytoplasm. The catalysed reaction is D-alanyl-D-alanine + UDP-N-acetyl-alpha-D-muramoyl-L-alanyl-gamma-D-glutamyl-meso-2,6-diaminopimelate + ATP = UDP-N-acetyl-alpha-D-muramoyl-L-alanyl-gamma-D-glutamyl-meso-2,6-diaminopimeloyl-D-alanyl-D-alanine + ADP + phosphate + H(+). Its pathway is cell wall biogenesis; peptidoglycan biosynthesis. In terms of biological role, involved in cell wall formation. Catalyzes the final step in the synthesis of UDP-N-acetylmuramoyl-pentapeptide, the precursor of murein. The protein is UDP-N-acetylmuramoyl-tripeptide--D-alanyl-D-alanine ligase of Rickettsia prowazekii (strain Madrid E).